The following is a 327-amino-acid chain: Zinc transport protein ZntB (327 aa).

Topologically, residues 1–271 are cytoplasmic; sequence METIYGSSLK…AMNRRTYTMS (271 aa). A helical transmembrane segment spans residues 272 to 292; the sequence is LLAMIFLPTTFLTGLFGVNLG. The Periplasmic segment spans residues 293–300; sequence GIPGNEYY. The helical transmembrane segment at 301 to 321 threads the bilayer; sequence LGFAIFCLLLFGLVLFVAWWL. The Cytoplasmic segment spans residues 322–327; sequence KKSKWL.

The protein belongs to the CorA metal ion transporter (MIT) (TC 1.A.35) family.

The protein localises to the cell inner membrane. It catalyses the reaction Zn(2+)(out) + H(+)(out) = Zn(2+)(in) + H(+)(in). Its function is as follows. Zinc transporter. Acts as a Zn(2+):proton symporter, which likely mediates zinc ion uptake. This chain is Zinc transport protein ZntB, found in Photorhabdus laumondii subsp. laumondii (strain DSM 15139 / CIP 105565 / TT01) (Photorhabdus luminescens subsp. laumondii).